The sequence spans 249 residues: Ribonuclease HII (249 aa).

The region spanning 30-221 (GPVAGVDEVG…VRRLVMDGEP (192 aa)) is the RNase H type-2 domain. Residues Asp-36, Glu-37, and Asp-130 each coordinate a divalent metal cation.

This sequence belongs to the RNase HII family. Mn(2+) serves as cofactor. The cofactor is Mg(2+).

It is found in the cytoplasm. The enzyme catalyses Endonucleolytic cleavage to 5'-phosphomonoester.. In terms of biological role, endonuclease that specifically degrades the RNA of RNA-DNA hybrids. The protein is Ribonuclease HII of Mycolicibacterium vanbaalenii (strain DSM 7251 / JCM 13017 / BCRC 16820 / KCTC 9966 / NRRL B-24157 / PYR-1) (Mycobacterium vanbaalenii).